A 68-amino-acid chain; its full sequence is Alpha-conotoxin-like Lt1.2 (68 aa).

Positions 1-21 are cleaved as a signal peptide; sequence MGMRMMFIMFMLVVLATTVDT. The propeptide occupies 22-48; it reads FTSDRALDAMNAAASNKASRLIALAVR. Disulfide bonds link Cys-50–Cys-56 and Cys-51–Cys-64. The interval 52 to 54 is lacks the Ser-Xaa-Pro motif that is crucial for potent interaction with nAChR; it reads ARA. A Glycine amide modification is found at Gly-65.

The protein belongs to the conotoxin A superfamily. In terms of tissue distribution, expressed by the venom duct.

It is found in the secreted. Functionally, alpha-conotoxins act on postsynaptic membranes, they bind to the nicotinic acetylcholine receptors (nAChR) and thus inhibit them. Has a distinct nAChR binding mode from other alpha-conotoxins, due to a different three residue motif (Ala-Xaa-Ala instead of the conserved Ser-Xaa-Pro motif). The sequence is that of Alpha-conotoxin-like Lt1.2 from Conus litteratus (Lettered cone).